A 343-amino-acid chain; its full sequence is SUMO-activating enzyme subunit aos-1 (343 aa).

The protein belongs to the ubiquitin-activating E1 family. As to quaternary structure, heterodimer of aos-1 and uba-2.

It participates in protein modification; protein sumoylation. Functionally, the dimeric enzyme acts as an E1 ligase for smo-1. It mediates ATP-dependent activation of smo-1 and formation of a thioester with a conserved cysteine residue on uba-2. This is SUMO-activating enzyme subunit aos-1 (aos-1) from Caenorhabditis elegans.